The sequence spans 570 residues: Sulfite reductase [NADPH] hemoprotein beta-component (570 aa).

Residues Cys434, Cys440, Cys479, and Cys483 each contribute to the [4Fe-4S] cluster site. Position 483 (Cys483) interacts with siroheme.

Belongs to the nitrite and sulfite reductase 4Fe-4S domain family. Alpha(8)-beta(8). The alpha component is a flavoprotein, the beta component is a hemoprotein. Siroheme is required as a cofactor. [4Fe-4S] cluster serves as cofactor.

The catalysed reaction is hydrogen sulfide + 3 NADP(+) + 3 H2O = sulfite + 3 NADPH + 4 H(+). It functions in the pathway sulfur metabolism; hydrogen sulfide biosynthesis; hydrogen sulfide from sulfite (NADPH route): step 1/1. Component of the sulfite reductase complex that catalyzes the 6-electron reduction of sulfite to sulfide. This is one of several activities required for the biosynthesis of L-cysteine from sulfate. The sequence is that of Sulfite reductase [NADPH] hemoprotein beta-component from Escherichia coli O9:H4 (strain HS).